A 276-amino-acid chain; its full sequence is Cruxhalorhodopsin-3 (276 aa).

A propeptide spanning residues 1–21 (MPAASTAATTLLQASQSEVLG) is cleaved from the precursor. Residues 22 to 25 (EIQS) lie on the Extracellular side of the membrane. Residues 26-51 (NFLLNSSLWVNIALAGVVILLFVAMG) form a helical membrane-spanning segment. At 52–57 (RELESS) the chain is on the cytoplasmic side. Residues 58 to 81 (RAKLIWVATMLVPLVSISSYAGLA) traverse the membrane as a helical segment. Over 82-105 (SGLTVGFLQMPPGHALAGQEVLSP) the chain is Extracellular. A helical transmembrane segment spans residues 106–127 (WGRYLTWTFSTPMILLALGLLA). Residues 128 to 130 (DTD) lie on the Cytoplasmic side of the membrane. Residues 131 to 154 (MASLFTAITMDIGMCITGLAAALV) traverse the membrane as a helical segment. The Extracellular portion of the chain corresponds to 155-157 (TSS). Residues 158 to 180 (HLLRWVFYGISCAFFIAVLYVLL) form a helical membrane-spanning segment. Residues 181 to 192 (VEWPADAEAAGT) lie on the Cytoplasmic side of the membrane. A helical transmembrane segment spans residues 193–216 (SEIFGTLKLLTVVLWLGYPILWAL). Residues 217–225 (GSEGVALLS) are Extracellular-facing. A helical membrane pass occupies residues 226 to 254 (VGVTSWGYSGLDILAKYVFAFLLLRWVAA). Lys241 is modified (N6-(retinylidene)lysine). Topologically, residues 255–276 (NEDTVTQAGMSLGSGGAAPADD) are cytoplasmic.

It belongs to the archaeal/bacterial/fungal opsin family.

It is found in the cell membrane. Light-driven chloride pump. The sequence is that of Cruxhalorhodopsin-3 (choP3) from Haloarcula vallismortis (Halobacterium vallismortis).